The primary structure comprises 170 residues: CASP-like protein 1F1 (170 aa).

Residues 1–16 are Cytoplasmic-facing; the sequence is MMGDNEGRRTPLLNLG. Residues 17-37 form a helical membrane-spanning segment; it reads VQVSMRVLTIGAAMASMWVMI. Residues 38–62 are Extracellular-facing; it reads TNREVASVYGIAFEAKYSYSSAFRY. The chain crosses the membrane as a helical span at residues 63–83; sequence LVYAQIAVCAATLFTLVWACL. Residues 84–88 lie on the Cytoplasmic side of the membrane; that stretch reads AVRRR. Residues 89-109 form a helical membrane-spanning segment; it reads GLVFALFFFDLLTTLTAISAF. The Extracellular portion of the chain corresponds to 110 to 141; sequence SAAFAEGYVGKYGNKQAGWLPICGYVHGYCSR. Residues 142–162 traverse the membrane as a helical segment; the sequence is VTISLAMSFASFILLFILTVL. The Cytoplasmic segment spans residues 163–170; it reads TASAARHY.

Belongs to the Casparian strip membrane proteins (CASP) family. Homodimer and heterodimers. In flowers, expressed in the anther wall.

It localises to the cell membrane. The chain is CASP-like protein 1F1 from Arabidopsis thaliana (Mouse-ear cress).